We begin with the raw amino-acid sequence, 1164 residues long: MKQQWQFLILCLLVLFLTVDSRGRRLLSDDVNDTALLTAFKQTSIKSDPTNFLGNWRYGSGRDPCTWRGVSCSSDGRVIGLDLRNGGLTGTLNLNNLTALSNLRSLYLQGNNFSSGDSSSSSGCSLEVLDLSSNSLTDSSIVDYVFSTCLNLVSVNFSHNKLAGKLKSSPSASNKRITTVDLSNNRFSDEIPETFIADFPNSLKHLDLSGNNVTGDFSRLSFGLCENLTVFSLSQNSISGDRFPVSLSNCKLLETLNLSRNSLIGKIPGDDYWGNFQNLRQLSLAHNLYSGEIPPELSLLCRTLEVLDLSGNSLTGQLPQSFTSCGSLQSLNLGNNKLSGDFLSTVVSKLSRITNLYLPFNNISGSVPISLTNCSNLRVLDLSSNEFTGEVPSGFCSLQSSSVLEKLLIANNYLSGTVPVELGKCKSLKTIDLSFNALTGLIPKEIWTLPKLSDLVMWANNLTGGIPESICVDGGNLETLILNNNLLTGSLPESISKCTNMLWISLSSNLLTGEIPVGIGKLEKLAILQLGNNSLTGNIPSELGNCKNLIWLDLNSNNLTGNLPGELASQAGLVMPGSVSGKQFAFVRNEGGTDCRGAGGLVEFEGIRAERLEHFPMVHSCPKTRIYSGMTMYMFSSNGSMIYLDLSYNAVSGSIPLGYGAMGYLQVLNLGHNLLTGTIPDSFGGLKAIGVLDLSHNDLQGFLPGSLGGLSFLSDLDVSNNNLTGPIPFGGQLTTFPLTRYANNSGLCGVPLPPCSSGSRPTRSHAHPKKQSIATGMSAGIVFSFMCIVMLIMALYRARKVQKKEKQREKYIESLPTSGSSSWKLSSVHEPLSINVATFEKPLRKLTFAHLLEATNGFSADSMIGSGGFGDVYKAKLADGSVVAIKKLIQVTGQGDREFMAEMETIGKIKHRNLVPLLGYCKIGEERLLVYEYMKYGSLETVLHEKTKKGGIFLDWSARKKIAIGAARGLAFLHHSCIPHIIHRDMKSSNVLLDQDFVARVSDFGMARLVSALDTHLSVSTLAGTPGYVPPEYYQSFRCTAKGDVYSYGVILLELLSGKKPIDPEEFGEDNNLVGWAKQLYREKRGAEILDPELVTDKSGDVELLHYLKIASQCLDDRPFKRPTMIQVMTMFKELVQVDTENDSLDEFLLKETPLVEESRDKEP.

Positions 1–23 (MKQQWQFLILCLLVLFLTVDSRG) are cleaved as a signal peptide. Topologically, residues 24-772 (RRLLSDDVND…RSHAHPKKQS (749 aa)) are extracellular. N-linked (GlcNAc...) asparagine glycosylation occurs at Asn-32. The Cys pair 1 motif lies at 65 to 72 (CTWRGVSC). LRR repeat units follow at residues 77 to 98 (RVIG…NNLT), 102 to 123 (NLRS…SSSG), 125 to 146 (SLEV…DYVF), 151 to 173 (NLVS…PSAS), 176 to 197 (RITT…TFIA), 202 to 224 (SLKH…SFGL), 227 to 248 (NLTV…VSLS), 252 to 274 (LLET…DYWG), 278 to 300 (NLRQ…LSLL), 303 to 325 (TLEV…FTSC), 327 to 347 (SLQS…STVV), 352 to 375 (RITN…TNCS), 376 to 397 (NLRV…GFCS), 403 to 424 (VLEK…ELGK), 427 to 448 (SLKT…EIWT), 451 to 473 (KLSD…ICVD), 476 to 498 (NLET…ISKC), 500 to 523 (NMLW…GKLE), 524 to 546 (KLAI…LGNC), and 548 to 570 (NLIW…LASQ). 2 N-linked (GlcNAc...) asparagine glycosylation sites follow: Asn-96 and Asn-112. N-linked (GlcNAc...) asparagine glycosylation is present at Asn-156. N-linked (GlcNAc...) asparagine glycosylation is found at Asn-212, Asn-227, and Asn-257. Residues Asn-362 and Asn-373 are each glycosylated (N-linked (GlcNAc...) asparagine). A glycan (N-linked (GlcNAc...) asparagine) is linked at Asn-461. N-linked (GlcNAc...) asparagine glycans are attached at residues Asn-532, Asn-558, and Asn-638. 4 LRR repeats span residues 640 to 662 (SMIY…YGAM), 664 to 686 (YLQV…FGGL), 688 to 711 (AIGV…GGLS), and 712 to 734 (FLSD…GQLT). 2 N-linked (GlcNAc...) asparagine glycosylation sites follow: Asn-722 and Asn-743. Positions 748-755 (CGVPLPPC) match the Cys pair 2 motif. Residues 773–793 (IATGMSAGIVFSFMCIVMLIM) form a helical membrane-spanning segment. The Cytoplasmic portion of the chain corresponds to 794-1164 (ALYRARKVQK…LVEESRDKEP (371 aa)). Phosphothreonine occurs at positions 847 and 855. One can recognise a Protein kinase domain in the interval 858 to 1136 (FSADSMIGSG…QVMTMFKELV (279 aa)). ATP contacts are provided by residues 864 to 872 (IGSGGFGDV) and Lys-886. Residue Tyr-931 is modified to Phosphotyrosine. The Proton acceptor role is filled by Asp-985. Ser-1020 bears the Phosphoserine mark. Residue Tyr-1028 is modified to Phosphotyrosine.

It belongs to the protein kinase superfamily. Ser/Thr protein kinase family. In terms of processing, autophosphorylated on Tyr and Thr residues. As to expression, predominantly expressed in vascular tissues. Expressed only during postembryonic development with a very discrete pattern of expression, preferentially in the two protophloem cell files at the elongation zone of the root. The expression in these two cell files attenuates as the phloem cells differentiate in the upper root. In cotyledons and leaves, it is expressed in phloem cells, starting at the cotyledons and shoot apex, moving toward the basal part of the leaves, where the expression is weak. Expressed in the secondary and tertiary veins and in the upper part of the cotyledons and leaves. Weakly or not expressed in the inflorescence stems. Has some complementary expression with BRL1.

It is found in the cell membrane. It catalyses the reaction L-seryl-[protein] + ATP = O-phospho-L-seryl-[protein] + ADP + H(+). The enzyme catalyses L-threonyl-[protein] + ATP = O-phospho-L-threonyl-[protein] + ADP + H(+). The catalysed reaction is L-tyrosyl-[protein] + ATP = O-phospho-L-tyrosyl-[protein] + ADP + H(+). In terms of biological role, receptor with a dual specificity kinase activity acting on both serine/threonine- and tyrosine-containing substrates. Binds brassinolide. Regulates, in response to brassinosteroid binding, a signaling cascade involved in plant development. May be involved in cell growth and vascular differentiation. The chain is Receptor-like protein kinase BRI1-like 3 (BRL3) from Arabidopsis thaliana (Mouse-ear cress).